Reading from the N-terminus, the 197-residue chain is Segregation and condensation protein B (197 aa).

This sequence belongs to the ScpB family. Homodimer. Homodimerization may be required to stabilize the binding of ScpA to the Smc head domains. Component of a cohesin-like complex composed of ScpA, ScpB and the Smc homodimer, in which ScpA and ScpB bind to the head domain of Smc. The presence of the three proteins is required for the association of the complex with DNA.

The protein resides in the cytoplasm. Participates in chromosomal partition during cell division. May act via the formation of a condensin-like complex containing Smc and ScpA that pull DNA away from mid-cell into both cell halves. In Bacillus licheniformis (strain ATCC 14580 / DSM 13 / JCM 2505 / CCUG 7422 / NBRC 12200 / NCIMB 9375 / NCTC 10341 / NRRL NRS-1264 / Gibson 46), this protein is Segregation and condensation protein B.